Here is a 393-residue protein sequence, read N- to C-terminus: NAD(P)H-quinone oxidoreductase subunit H, chloroplastic (393 aa).

The protein belongs to the complex I 49 kDa subunit family. NDH is composed of at least 16 different subunits, 5 of which are encoded in the nucleus.

Its subcellular location is the plastid. The protein resides in the chloroplast thylakoid membrane. The enzyme catalyses a plastoquinone + NADH + (n+1) H(+)(in) = a plastoquinol + NAD(+) + n H(+)(out). The catalysed reaction is a plastoquinone + NADPH + (n+1) H(+)(in) = a plastoquinol + NADP(+) + n H(+)(out). Its function is as follows. NDH shuttles electrons from NAD(P)H:plastoquinone, via FMN and iron-sulfur (Fe-S) centers, to quinones in the photosynthetic chain and possibly in a chloroplast respiratory chain. The immediate electron acceptor for the enzyme in this species is believed to be plastoquinone. Couples the redox reaction to proton translocation, and thus conserves the redox energy in a proton gradient. This chain is NAD(P)H-quinone oxidoreductase subunit H, chloroplastic, found in Jasminum nudiflorum (Winter jasmine).